Here is a 314-residue protein sequence, read N- to C-terminus: Homoserine O-acetyltransferase (314 aa).

Cysteine 142 functions as the Acyl-thioester intermediate in the catalytic mechanism. Residues lysine 163 and serine 192 each coordinate substrate. The active-site Proton acceptor is histidine 235. The active site involves glutamate 237. Position 249 (arginine 249) interacts with substrate.

It belongs to the MetA family.

It is found in the cytoplasm. The catalysed reaction is L-homoserine + acetyl-CoA = O-acetyl-L-homoserine + CoA. It functions in the pathway amino-acid biosynthesis; L-methionine biosynthesis via de novo pathway; O-acetyl-L-homoserine from L-homoserine: step 1/1. Functionally, transfers an acetyl group from acetyl-CoA to L-homoserine, forming acetyl-L-homoserine. This chain is Homoserine O-acetyltransferase, found in Streptococcus pneumoniae (strain Taiwan19F-14).